Reading from the N-terminus, the 148-residue chain is Large ribosomal subunit protein bL9 (148 aa).

Belongs to the bacterial ribosomal protein bL9 family.

Functionally, binds to the 23S rRNA. This is Large ribosomal subunit protein bL9 from Pseudomonas putida (strain ATCC 700007 / DSM 6899 / JCM 31910 / BCRC 17059 / LMG 24140 / F1).